The sequence spans 367 residues: Anthranilate phosphoribosyltransferase (367 aa).

Residues 1–17 (MVLSSEASSAADHSAAA) show a composition bias toward low complexity. The disordered stretch occupies residues 1–22 (MVLSSEASSAADHSAAAPIPTS). 5-phospho-alpha-D-ribose 1-diphosphate-binding positions include Gly-104, 107-108 (GD), Thr-112, 114-117 (NLST), 132-140 (KHGNRAASS), and Gly-144. Gly-104 contributes to the anthranilate binding site. Mg(2+) is bound at residue Ser-116. Asn-135 contributes to the anthranilate binding site. Position 190 (Arg-190) interacts with anthranilate. Positions 248 and 249 each coordinate Mg(2+).

Belongs to the anthranilate phosphoribosyltransferase family. As to quaternary structure, homodimer. It depends on Mg(2+) as a cofactor.

The enzyme catalyses N-(5-phospho-beta-D-ribosyl)anthranilate + diphosphate = 5-phospho-alpha-D-ribose 1-diphosphate + anthranilate. Its pathway is amino-acid biosynthesis; L-tryptophan biosynthesis; L-tryptophan from chorismate: step 2/5. In terms of biological role, catalyzes the transfer of the phosphoribosyl group of 5-phosphorylribose-1-pyrophosphate (PRPP) to anthranilate to yield N-(5'-phosphoribosyl)-anthranilate (PRA). The polypeptide is Anthranilate phosphoribosyltransferase (Mycobacterium marinum (strain ATCC BAA-535 / M)).